The primary structure comprises 214 residues: Adenylate kinase (214 aa).

An ATP-binding site is contributed by 10–15 (GAGKGT). Residues 30 to 59 (STGDMLRAAVKAGTPLGLEAKKVMDAGQLV) form an NMP region. AMP contacts are provided by residues T31, R36, 57–59 (QLV), 85–88 (GFPR), and Q92. Residues 122–159 (GRRVHSGSGRVYHVVFNPPKVEGKDDVTGEDLSIRPDD) are LID. Residues R123 and 132 to 133 (VY) each bind ATP. The AMP site is built by R156 and R167. Q200 serves as a coordination point for ATP.

This sequence belongs to the adenylate kinase family. Monomer.

Its subcellular location is the cytoplasm. It catalyses the reaction AMP + ATP = 2 ADP. Its pathway is purine metabolism; AMP biosynthesis via salvage pathway; AMP from ADP: step 1/1. Its function is as follows. Catalyzes the reversible transfer of the terminal phosphate group between ATP and AMP. Plays an important role in cellular energy homeostasis and in adenine nucleotide metabolism. The sequence is that of Adenylate kinase from Shewanella frigidimarina (strain NCIMB 400).